A 305-amino-acid polypeptide reads, in one-letter code: Probable pyridoxal 5'-phosphate synthase subunit pdx1 (305 aa).

Aspartate 33 is a D-ribose 5-phosphate binding site. The Schiff-base intermediate with D-ribose 5-phosphate role is filled by lysine 90. Residue glycine 162 coordinates D-ribose 5-phosphate. Arginine 174 contributes to the D-glyceraldehyde 3-phosphate binding site. Residues glycine 223 and 244-245 (GS) contribute to the D-ribose 5-phosphate site.

The protein belongs to the PdxS/SNZ family. In terms of assembly, homohexamer.

The catalysed reaction is aldehydo-D-ribose 5-phosphate + D-glyceraldehyde 3-phosphate + L-glutamine = pyridoxal 5'-phosphate + L-glutamate + phosphate + 3 H2O + H(+). It participates in cofactor biosynthesis; pyridoxal 5'-phosphate biosynthesis. Catalyzes the formation of pyridoxal 5'-phosphate from ribose 5-phosphate (RBP), glyceraldehyde 3-phosphate (G3P) and ammonia. The ammonia is provided by pdx2. Can also use ribulose 5-phosphate and dihydroxyacetone phosphate as substrates, resulting from enzyme-catalyzed isomerization of RBP and G3P, respectively. This is Probable pyridoxal 5'-phosphate synthase subunit pdx1 (pdx1) from Dictyostelium discoideum (Social amoeba).